Reading from the N-terminus, the 225-residue chain is Membrane protein (225 aa).

Over 1 to 20 (MSNETNCTLDFEQSVQLFKE) the chain is Virion surface. Asn-3 and Asn-6 each carry an N-linked (GlcNAc...) asparagine; by host glycan. The chain crosses the membrane as a helical span at residues 21–41 (YNLFITAFLLFLTIILQYGYA). Residues 42 to 51 (TRSKVIYTLK) are Intravirion-facing. Residues 52–72 (MIVLWCFWPLNIAVGVISCIY) form a helical membrane-spanning segment. Topologically, residues 73 to 77 (PPNTG) are virion surface. A helical transmembrane segment spans residues 78 to 98 (GLVAAIILTVFACLSFVGYWI). Over 99–225 (QSIRLFKRCR…VATGGSSLYT (127 aa)) the chain is Intravirion.

This sequence belongs to the gammacoronaviruses M protein family. As to quaternary structure, homomultimer. Interacts with envelope E protein in the budding compartment of the host cell, which is located between endoplasmic reticulum and the Golgi complex. Forms a complex with HE and S proteins. Interacts with nucleocapsid N protein. This interaction probably participates in RNA packaging into the virus.

The protein resides in the virion membrane. It is found in the host Golgi apparatus membrane. Functionally, component of the viral envelope that plays a central role in virus morphogenesis and assembly via its interactions with other viral proteins. This chain is Membrane protein, found in Gallus gallus (Chicken).